We begin with the raw amino-acid sequence, 259 residues long: Probable ABC transporter permease protein RT0041 (259 aa).

A run of 5 helical transmembrane segments spans residues 20-40 (VGIF…PPLY), 49-69 (LFIG…SGAV), 148-168 (VIAA…IGVM), 195-215 (LIDV…ISII), and 237-257 (AVVN…ELLF).

This sequence belongs to the MlaE permease family.

The protein resides in the cell inner membrane. In terms of biological role, could be part of an ABC transporter complex. The sequence is that of Probable ABC transporter permease protein RT0041 from Rickettsia typhi (strain ATCC VR-144 / Wilmington).